A 360-amino-acid chain; its full sequence is LETM1 domain-containing protein 1 (360 aa).

Residues 1–110 (MALSRVCWAR…KKARRIKTNM (110 aa)) are required and sufficient for mitochondrial import. Over 1–137 (MALSRVCWAR…LRQFRRDVTK (137 aa)) the chain is Cytoplasmic. Residues 138 to 158 (CLFLGILSIPPFANYLVFLLM) form a helical membrane-spanning segment. The Mitochondrial intermembrane segment spans residues 159 to 360 (YLFPRQLLIR…LSINYVGSRR (202 aa)). The region spanning 186–360 (LRKQSHPEIL…LSINYVGSRR (175 aa)) is the Letm1 RBD domain.

As to quaternary structure, interacts with BRI3BP. Interacts (via C-terminal) with SMARCA4; the interaction regulates transcriptional expression of thermogenic genes in brown adipose tissue.

The protein resides in the mitochondrion outer membrane. Its subcellular location is the nucleus. The protein localises to the mitochondrion inner membrane. Plays an essential role for mitochondrial structure and function, as well as thermogenesis of brown adipocytes. In brown adipose tissue also localizes in the nucleus where it interacts with the chromatin remodeler SMARCA4 to regulate thermogenic genes expression, such as UCP1. May regulate phagocytosis and inflammatory responses to lipopolysaccharide in macrophages. Involved in tumorigenesis and may function as a negative regulator of the p53/TP53. The chain is LETM1 domain-containing protein 1 from Bos taurus (Bovine).